Here is a 416-residue protein sequence, read N- to C-terminus: Serine hydroxymethyltransferase (416 aa).

(6S)-5,6,7,8-tetrahydrofolate-binding positions include L117 and 121-123 (GHL). Position 225 is an N6-(pyridoxal phosphate)lysine (K225). Residue 351–353 (SPF) coordinates (6S)-5,6,7,8-tetrahydrofolate.

Belongs to the SHMT family. As to quaternary structure, homodimer. Pyridoxal 5'-phosphate is required as a cofactor.

It is found in the cytoplasm. The enzyme catalyses (6R)-5,10-methylene-5,6,7,8-tetrahydrofolate + glycine + H2O = (6S)-5,6,7,8-tetrahydrofolate + L-serine. It participates in one-carbon metabolism; tetrahydrofolate interconversion. It functions in the pathway amino-acid biosynthesis; glycine biosynthesis; glycine from L-serine: step 1/1. Functionally, catalyzes the reversible interconversion of serine and glycine with tetrahydrofolate (THF) serving as the one-carbon carrier. This reaction serves as the major source of one-carbon groups required for the biosynthesis of purines, thymidylate, methionine, and other important biomolecules. Also exhibits THF-independent aldolase activity toward beta-hydroxyamino acids, producing glycine and aldehydes, via a retro-aldol mechanism. The protein is Serine hydroxymethyltransferase of Blochmanniella pennsylvanica (strain BPEN).